A 614-amino-acid chain; its full sequence is MSQIETKEFQTEIRQLLDIVINSLYTDREIFLRELISNAADASEKVRYMQLSGQNVKDQELPLEIRITPDENAKTLTIADAGIGMTKEDLIENIGTIAHSGSKAFVQRLAEAGDKKDVNLIGQFGVGFYSAFMVADKVSLTSRSYEPDAQGYRWESDGRGSYSISEEMDLPRGTSITLHLKEDAHSFAQADTVKRIIKQYSSFVPYPVYVGEEKINTVQALWTKNKNEISEEEYKEFYKYIANAYDEPLMRMHFSSDAPINLNALLFVPKSNMEKFGFGRMEAGVNLYCKKVLIQEKAKDIVPEWLRFARGVVDSEELPLNISRETMQDSALIAKLNKVVTSRFLKFLDDQAKNEPEIFKEFWNEFSIFLKEGAANDFTHRQEILKLLRFESSKTGEGELISLGDYVGRMKEGQEAIYFINGPTRQIIEEGPYLEVFKNKDYEVIYTYDGIDDYVFDMIREYDGKRLLSADHGDLNLADEDGASAEEKLLSEEELKEFNDWLKEVLGEKVTEVRESKRLVDSPAIILSHYGTHSMQRMMQLMNRDLQDVPAGILEINPKHVLIQRLNDLRKQEDSFAPLAAEQLFANAQIAAGIIVDPRSMVSRLNEILEKALR.

The segment at 1 to 324 is a; substrate-binding; the sequence is MSQIETKEFQ…SEELPLNISR (324 aa). The interval 325–537 is b; it reads ETMQDSALIA…SHYGTHSMQR (213 aa). The tract at residues 538-614 is c; the sequence is MMQLMNRDLQ…LNEILEKALR (77 aa).

This sequence belongs to the heat shock protein 90 family. Homodimer.

Its subcellular location is the cytoplasm. Its function is as follows. Molecular chaperone. Has ATPase activity. The polypeptide is Chaperone protein HtpG (Desulfitobacterium hafniense (strain Y51)).